Consider the following 323-residue polypeptide: tRNA U34 carboxymethyltransferase (323 aa).

Carboxy-S-adenosyl-L-methionine is bound by residues K91, W105, K110, G130, 152 to 154 (DPT), 181 to 182 (IE), M196, Y200, and R315.

The protein belongs to the class I-like SAM-binding methyltransferase superfamily. CmoB family. As to quaternary structure, homotetramer.

The catalysed reaction is carboxy-S-adenosyl-L-methionine + 5-hydroxyuridine(34) in tRNA = 5-carboxymethoxyuridine(34) in tRNA + S-adenosyl-L-homocysteine + H(+). Its function is as follows. Catalyzes carboxymethyl transfer from carboxy-S-adenosyl-L-methionine (Cx-SAM) to 5-hydroxyuridine (ho5U) to form 5-carboxymethoxyuridine (cmo5U) at position 34 in tRNAs. The sequence is that of tRNA U34 carboxymethyltransferase from Escherichia coli O157:H7.